The following is a 168-amino-acid chain: 2-C-methyl-D-erythritol 2,4-cyclodiphosphate synthase (168 aa).

A divalent metal cation-binding residues include Asp-11 and His-13. Residues 11–13 (DVH) and 41–42 (HS) each bind 4-CDP-2-C-methyl-D-erythritol 2-phosphate. An a divalent metal cation-binding site is contributed by His-49. 4-CDP-2-C-methyl-D-erythritol 2-phosphate is bound by residues 63-65 (DIG), 68-72 (FPDTD), 139-142 (TTTE), Phe-146, and Arg-149.

It belongs to the IspF family. In terms of assembly, homotrimer. Requires a divalent metal cation as cofactor.

It catalyses the reaction 4-CDP-2-C-methyl-D-erythritol 2-phosphate = 2-C-methyl-D-erythritol 2,4-cyclic diphosphate + CMP. Its pathway is isoprenoid biosynthesis; isopentenyl diphosphate biosynthesis via DXP pathway; isopentenyl diphosphate from 1-deoxy-D-xylulose 5-phosphate: step 4/6. Its function is as follows. Involved in the biosynthesis of isopentenyl diphosphate (IPP) and dimethylallyl diphosphate (DMAPP), two major building blocks of isoprenoid compounds. Catalyzes the conversion of 4-diphosphocytidyl-2-C-methyl-D-erythritol 2-phosphate (CDP-ME2P) to 2-C-methyl-D-erythritol 2,4-cyclodiphosphate (ME-CPP) with a corresponding release of cytidine 5-monophosphate (CMP). The chain is 2-C-methyl-D-erythritol 2,4-cyclodiphosphate synthase from Psychrobacter cryohalolentis (strain ATCC BAA-1226 / DSM 17306 / VKM B-2378 / K5).